The chain runs to 927 residues: Valine--tRNA ligase (927 aa).

The short motif at 45–55 (PNVTGSLHMGH) is the 'HIGH' region element. The short motif at 571-575 (KMSKS) is the 'KMSKS' region element. Residue Lys-574 participates in ATP binding. The stretch at 856–917 (SLIDLAAEAA…EYRDAQDKLA (62 aa)) forms a coiled coil.

The protein belongs to the class-I aminoacyl-tRNA synthetase family. ValS type 1 subfamily. In terms of assembly, monomer.

Its subcellular location is the cytoplasm. It catalyses the reaction tRNA(Val) + L-valine + ATP = L-valyl-tRNA(Val) + AMP + diphosphate. Its function is as follows. Catalyzes the attachment of valine to tRNA(Val). As ValRS can inadvertently accommodate and process structurally similar amino acids such as threonine, to avoid such errors, it has a 'posttransfer' editing activity that hydrolyzes mischarged Thr-tRNA(Val) in a tRNA-dependent manner. This chain is Valine--tRNA ligase, found in Mesorhizobium japonicum (strain LMG 29417 / CECT 9101 / MAFF 303099) (Mesorhizobium loti (strain MAFF 303099)).